Reading from the N-terminus, the 134-residue chain is MKKTAVLNSHISSAISTLGHYDLLTINDAGMPIPNDDKRIDLAVTKSLPRFIDVLETVLTEMEIQKVYLAEEIKTANAQQLKAIKKLINDDVEIKFIAHSEMKEMLKSPLNKGNIRTGEITPFSNIILESNVTF.

His20 serves as the catalytic Proton donor. Substrate contacts are provided by residues Asp28, His99, and 123–125; that span reads FSN.

The protein belongs to the RbsD / FucU family. RbsD subfamily. As to quaternary structure, homodecamer.

Its subcellular location is the cytoplasm. It catalyses the reaction beta-D-ribopyranose = beta-D-ribofuranose. It functions in the pathway carbohydrate metabolism; D-ribose degradation; D-ribose 5-phosphate from beta-D-ribopyranose: step 1/2. Functionally, catalyzes the interconversion of beta-pyran and beta-furan forms of D-ribose. The protein is D-ribose pyranase of Staphylococcus epidermidis (strain ATCC 12228 / FDA PCI 1200).